Here is a 60-residue protein sequence, read N- to C-terminus: Large ribosomal subunit protein bL32 (60 aa).

The interval 1–60 (MAVQQNKKTPSKRGMHRSHDFLVAPQLSVEQTTGETHMRHHISPNGFYRGRKVLKTKNDE) is disordered. Residues 49–60 (RGRKVLKTKNDE) are compositionally biased toward basic residues.

Belongs to the bacterial ribosomal protein bL32 family.

The protein is Large ribosomal subunit protein bL32 of Herminiimonas arsenicoxydans.